Here is a 490-residue protein sequence, read N- to C-terminus: B3 domain-containing protein REM14 (490 aa).

3 consecutive DNA-binding regions (TF-B3) follow at residues 3-95, 130-226, and 236-333; these read NQHF…LGPS, CFSA…LPKG, and CFVA…LSNE. The tract at residues 343–367 is disordered; it reads NEVESLSTDQESHEESSHNEKISRR. The span at 352-364 shows a compositional bias: basic and acidic residues; sequence QESHEESSHNEKI. Positions 387–484 form a DNA-binding region, TF-B3 4; sequence FVTLNLTPYN…TSCVLKFCSK (98 aa).

Its subcellular location is the nucleus. The sequence is that of B3 domain-containing protein REM14 (REM14) from Arabidopsis thaliana (Mouse-ear cress).